Consider the following 345-residue polypeptide: Methionine import ATP-binding protein MetN (345 aa).

Positions 2-241 (IKLNNIXKIF…PKTELAQEFI (240 aa)) constitute an ABC transporter domain. 38-45 (GASGAGKS) contacts ATP.

Belongs to the ABC transporter superfamily. Methionine importer (TC 3.A.1.24) family. As to quaternary structure, the complex is composed of two ATP-binding proteins (MetN), two transmembrane proteins (MetI) and a solute-binding protein (MetQ).

The protein resides in the cell inner membrane. It carries out the reaction L-methionine(out) + ATP + H2O = L-methionine(in) + ADP + phosphate + H(+). It catalyses the reaction D-methionine(out) + ATP + H2O = D-methionine(in) + ADP + phosphate + H(+). Part of the ABC transporter complex MetNIQ involved in methionine import. Responsible for energy coupling to the transport system. The polypeptide is Methionine import ATP-binding protein MetN (Haemophilus influenzae (strain ATCC 51907 / DSM 11121 / KW20 / Rd)).